Here is a 312-residue protein sequence, read N- to C-terminus: tRNA uridine(34) hydroxylase (312 aa).

The 96-residue stretch at 130-225 (RGDEVVFFDG…YGEKFGNQGL (96 aa)) folds into the Rhodanese domain. The active-site Cysteine persulfide intermediate is C185.

This sequence belongs to the TrhO family.

It catalyses the reaction uridine(34) in tRNA + AH2 + O2 = 5-hydroxyuridine(34) in tRNA + A + H2O. Catalyzes oxygen-dependent 5-hydroxyuridine (ho5U) modification at position 34 in tRNAs. The chain is tRNA uridine(34) hydroxylase from Corynebacterium efficiens (strain DSM 44549 / YS-314 / AJ 12310 / JCM 11189 / NBRC 100395).